The chain runs to 451 residues: MPTFYLALHGGQTYHLIVDTDSVGNPSLSVIPSNPYQEQLSDTPLIPLTIFVGENTGVPPPPPPPPQRRDAWTQEPSPLDWDPLGYDVGHGPLASAMRMLWMANYIVRQSRGDRGLILPQGPQTAPQAMLVQPHVPPLRPTAPTILSPLSQPRLTPPQPLMMPPRPTPPTPLPPATLTVPPRPTRPTTLPPTPLLTVLQRPTELQPTPSPPRMHLPVLHVPDQSMHPLTHQSTPNDPDSPEPRSPTVFYNIPPMPLPPSQLPPPAAPAQPPPGVINDQQLHHLPSGPPWWPPICDPPQPSKTQGQSRGQSRGRGRGRGRGRGKSRDKQRKPGGPWRPEPNTSSPSMPELSPVLGLHQGQGAGDSPTPGPSNAAPVCRNSHTATPNVSPIHEPESHNSPEAPILFPDDWYPPSIDPADLDESWDYIFETTESPSSDEDYVEGPSKRPRPSIQ.

An SMARCB1/INI1 binding region spans residues 1–176 (MPTFYLALHG…TPPTPLPPAT (176 aa)). Disordered stretches follow at residues 52-78 (VGEN…EPSP) and 148-451 (PLSQ…PSIQ). 3 stretches are compositionally biased toward pro residues: residues 154 to 193 (LTPP…PPTP), 252 to 273 (PPMP…PPPG), and 285 to 299 (SGPP…PPQP). Over residues 300 to 309 (SKTQGQSRGQ) the composition is skewed to low complexity. Residues 310–330 (SRGRGRGRGRGRGKSRDKQRK) are compositionally biased toward basic residues. 7 tandem repeats follow at residues 311 to 312 (RG), 313 to 314 (RG), 315 to 316 (RG), 317 to 318 (RG), 319 to 320 (RG), 321 to 322 (RG), and 323 to 324 (KS). Residues 311–324 (RGRGRGRGRGRGKS) form a 6.5 X 2 AA tandem repeats of R-G region. 2 short sequence motifs (PXLXP motif, interaction with host ZMYND11) span residues 347-351 (PELSP) and 401-405 (PILFP).

This sequence belongs to the herpesviridae EBNA2 family. In terms of assembly, interacts with human SMARCB1/INI1, presumably generating an open chromatin conformation at the EBNA2-responsive target genes. Interacts with human WAPL. Interacts with host CBF1; this interaction allows transcriptional activation by EBNA2. Interacts with host general transcription factors GTF2B, ERCC2 and ERCC3. Interacts (via PXLXP motif) with host ZMYND11/BS69 (via MYND-type zinc finger). Interacts with host EBF1. In terms of processing, phosphorylated.

It is found in the host nucleus matrix. Its function is as follows. Plays a key role in the activation of the host resting B-cell and stimulation of B-cell proliferation. Acts by up-regulating the expression of viral EBNA1-6, LMP1, LMP2A and LMP2B genes, as well as several host genes including CD21, CD23 and MYC. Activates transcription by acting as an adapter molecule that binds to cellular sequence-specific DNA-binding proteins such as host CBF1, SMARCB1 and SPI1. Once EBNA2 is near promoter sites, its acidic activating domain recruits basal and activation-associated transcription factors TFIIB, TAF40, TFIIH components ERCC2 and ERCC3, and CBP in order to promote transcription. Alternatively, EBNA2 can affect activities of cell cycle regulators and retard cell cycle progression at G2/M phase. It also induces chromosomal instability, by disrupting mitotic checkpoints, multi-nucleation and formation of micronuclei in infected cells. The polypeptide is Epstein-Barr nuclear antigen 2 (EBNA2) (Epstein-Barr virus (strain GD1) (HHV-4)).